The primary structure comprises 282 residues: Aldo-keto reductase ML1669 (282 aa).

Tyrosine 57 serves as the catalytic Proton donor. 8 residues coordinate NADPH: leucine 197, valine 235, arginine 237, serine 238, alanine 239, serine 246, asparagine 247, and arginine 273.

The protein belongs to the aldo/keto reductase family.

This is Aldo-keto reductase ML1669 from Mycobacterium leprae (strain TN).